A 315-amino-acid polypeptide reads, in one-letter code: Acetyl-coenzyme A carboxylase carboxyl transferase subunit alpha (315 aa).

A CoA carboxyltransferase C-terminal domain is found at 32-293 (NISDEIARLQ…RADLVQQLDM (262 aa)).

Belongs to the AccA family. In terms of assembly, acetyl-CoA carboxylase is a heterohexamer composed of biotin carboxyl carrier protein (AccB), biotin carboxylase (AccC) and two subunits each of ACCase subunit alpha (AccA) and ACCase subunit beta (AccD).

The protein resides in the cytoplasm. It catalyses the reaction N(6)-carboxybiotinyl-L-lysyl-[protein] + acetyl-CoA = N(6)-biotinyl-L-lysyl-[protein] + malonyl-CoA. Its pathway is lipid metabolism; malonyl-CoA biosynthesis; malonyl-CoA from acetyl-CoA: step 1/1. Component of the acetyl coenzyme A carboxylase (ACC) complex. First, biotin carboxylase catalyzes the carboxylation of biotin on its carrier protein (BCCP) and then the CO(2) group is transferred by the carboxyltransferase to acetyl-CoA to form malonyl-CoA. The chain is Acetyl-coenzyme A carboxylase carboxyl transferase subunit alpha from Pseudomonas putida (strain ATCC 47054 / DSM 6125 / CFBP 8728 / NCIMB 11950 / KT2440).